A 189-amino-acid chain; its full sequence is MFWSLALLAYLLGSLSFAIVLSRLTGSPDPRSSGSGNAGATNMLRLAGRKLAILTLLGDLCKGMLPVLLARQVGLDPQEQAWVGICAVLGHLFPVYFRFQGGKGVATAAGMLMALYFPAALLAIGAWVLTFYLTRTSSLAALIATPLTLPLLAWREPEALLPMTVLTLMIVWRHRSNLRDLFAGRERHF.

The next 5 helical transmembrane spans lie at 1–21 (MFWS…AIVL), 50–70 (KLAI…VLLA), 81–101 (AWVG…RFQG), 111–131 (MLMA…VLTF), and 151–171 (LLAW…LMIV).

The protein belongs to the PlsY family. Probably interacts with PlsX.

It localises to the cell inner membrane. The enzyme catalyses an acyl phosphate + sn-glycerol 3-phosphate = a 1-acyl-sn-glycero-3-phosphate + phosphate. The protein operates within lipid metabolism; phospholipid metabolism. Functionally, catalyzes the transfer of an acyl group from acyl-phosphate (acyl-PO(4)) to glycerol-3-phosphate (G3P) to form lysophosphatidic acid (LPA). This enzyme utilizes acyl-phosphate as fatty acyl donor, but not acyl-CoA or acyl-ACP. This chain is Glycerol-3-phosphate acyltransferase, found in Pseudomonas entomophila (strain L48).